The sequence spans 972 residues: RNA polymerase-associated protein RapA (972 aa).

Residues 164 to 334 (EVGRRYAPRV…FARLRLLDPD (171 aa)) enclose the Helicase ATP-binding domain. 177 to 184 (DEVGLGKT) contributes to the ATP binding site. Positions 280 to 283 (DEAH) match the DEAH box motif. The 179-residue stretch at 493–671 (RVNWLLEMLK…HEPEALENLI (179 aa)) folds into the Helicase C-terminal domain.

The protein belongs to the SNF2/RAD54 helicase family. RapA subfamily. Interacts with the RNAP. Has a higher affinity for the core RNAP than for the holoenzyme. Its ATPase activity is stimulated by binding to RNAP.

Functionally, transcription regulator that activates transcription by stimulating RNA polymerase (RNAP) recycling in case of stress conditions such as supercoiled DNA or high salt concentrations. Probably acts by releasing the RNAP, when it is trapped or immobilized on tightly supercoiled DNA. Does not activate transcription on linear DNA. Probably not involved in DNA repair. The protein is RNA polymerase-associated protein RapA of Photobacterium profundum (strain SS9).